The sequence spans 120 residues: Large ribosomal subunit protein bL12 (120 aa).

Belongs to the bacterial ribosomal protein bL12 family. In terms of assembly, homodimer. Part of the ribosomal stalk of the 50S ribosomal subunit. Forms a multimeric L10(L12)X complex, where L10 forms an elongated spine to which 2 to 4 L12 dimers bind in a sequential fashion. Binds GTP-bound translation factors.

Forms part of the ribosomal stalk which helps the ribosome interact with GTP-bound translation factors. Is thus essential for accurate translation. This chain is Large ribosomal subunit protein bL12, found in Alkaliphilus metalliredigens (strain QYMF).